A 364-amino-acid polypeptide reads, in one-letter code: Chorismate synthase (364 aa).

Arg48 is a binding site for NADP(+). Residues 126-128 (RSS), Gly288, 303-307 (KPIAS), and Arg329 each bind FMN.

This sequence belongs to the chorismate synthase family. As to quaternary structure, homotetramer. Requires FMNH2 as cofactor.

The enzyme catalyses 5-O-(1-carboxyvinyl)-3-phosphoshikimate = chorismate + phosphate. Its pathway is metabolic intermediate biosynthesis; chorismate biosynthesis; chorismate from D-erythrose 4-phosphate and phosphoenolpyruvate: step 7/7. Functionally, catalyzes the anti-1,4-elimination of the C-3 phosphate and the C-6 proR hydrogen from 5-enolpyruvylshikimate-3-phosphate (EPSP) to yield chorismate, which is the branch point compound that serves as the starting substrate for the three terminal pathways of aromatic amino acid biosynthesis. This reaction introduces a second double bond into the aromatic ring system. The chain is Chorismate synthase from Desulfovibrio desulfuricans (strain ATCC 27774 / DSM 6949 / MB).